Consider the following 599-residue polypeptide: Beta-(1--&gt;2)glucan export ATP-binding/permease protein NdvA (599 aa).

Residues 21-311 (GWILAVANLL…VVNFINNVLM (291 aa)) enclose the ABC transmembrane type-1 domain. 6 helical membrane-spanning segments follow: residues 22–42 (WILA…PILF), 68–88 (LLGA…LVAL), 146–166 (EHFA…YINW), 168–188 (LAIL…LVVH), 254–274 (VITR…GIYL), and 276–296 (QQGL…TLLI). An ABC transporter domain is found at 345 to 579 (VEFQNVSFSY…GGAFAQLARA (235 aa)). ATP is bound at residue 378–385 (GATGAGKS).

It belongs to the ABC transporter superfamily. Beta-(1--&gt;2)glucan exporter (TC 3.A.1.108.1) family. In terms of assembly, homodimer.

It is found in the cell inner membrane. The enzyme catalyses [(1-&gt;2)-beta-D-glucosyl](n)(in) + ATP + H2O = [(1-&gt;2)-beta-D-glucosyl](n)(out) + ADP + phosphate + H(+). Its function is as follows. Involved in beta-(1--&gt;2)glucan export. Transmembrane domains (TMD) form a pore in the inner membrane and the ATP-binding domain (NBD) is responsible for energy generation. The chain is Beta-(1--&gt;2)glucan export ATP-binding/permease protein NdvA from Rhodopseudomonas palustris (strain ATCC BAA-98 / CGA009).